We begin with the raw amino-acid sequence, 292 residues long: Ribosomal protein L11 methyltransferase (292 aa).

S-adenosyl-L-methionine-binding residues include T136, G159, D181, and N228.

Belongs to the methyltransferase superfamily. PrmA family.

Its subcellular location is the cytoplasm. It carries out the reaction L-lysyl-[protein] + 3 S-adenosyl-L-methionine = N(6),N(6),N(6)-trimethyl-L-lysyl-[protein] + 3 S-adenosyl-L-homocysteine + 3 H(+). Its function is as follows. Methylates ribosomal protein L11. In Rhizobium etli (strain CIAT 652), this protein is Ribosomal protein L11 methyltransferase.